Reading from the N-terminus, the 915-residue chain is Protein O-mannosyl-transferase TMTC3 (915 aa).

The Cytoplasmic segment spans residues 1–8 (MANINLKE). The helical transmembrane segment at 9–29 (ITLIVGVVTACYWNSLFCGFV) threads the bilayer. The Extracellular portion of the chain corresponds to 30–93 (FDDVSAILDN…LSELKPMSYH (64 aa)). A helical membrane pass occupies residues 94 to 114 (LLNMIFHAVVSVIFLKVCKLF). The Cytoplasmic segment spans residues 115–120 (LDNKSS). Helical transmembrane passes span 121 to 139 (VIAS…AVTG) and 140 to 158 (VVGR…AFLS). Over 159-166 (YTRSKGPD) the chain is Cytoplasmic. A helical transmembrane segment spans residues 167 to 187 (NSIIWTPIALTVFLVAVATLC). The Extracellular portion of the chain corresponds to 188–193 (KEQGIT). A helical transmembrane segment spans residues 194–214 (VVGICCVYEVFIAQGYTLPLL). Residues 215–231 (CTTAGQFLRGKGSIPFS) are Cytoplasmic-facing. The chain crosses the membrane as a helical span at residues 232–252 (MLQTLVKLIVLMFSTLLLVVI). Topologically, residues 253 to 317 (RVQVIQSQLP…TIPLIESLLD (65 aa)) are extracellular. The helical transmembrane segment at 318–338 (IRNLATFTFFCFLGMLGVFSI) threads the bilayer. At 339–353 (RYSGDSSKTVLMALC) the chain is on the cytoplasmic side. The chain crosses the membrane as a helical span at residues 354–374 (LMALPFIPASNLFFPVGFVVA). Over 375-376 (ER) the chain is Extracellular. The chain crosses the membrane as a helical span at residues 377–397 (VLYVPSMGFCILVAHGWQKIS). The Cytoplasmic portion of the chain corresponds to 398–404 (TKSVFKK). Residues 405–423 (LSWICLSMVILTHSLKTFH) form a helical membrane-spanning segment. The Extracellular segment spans residues 424 to 915 (RNWDWESEYT…EEIERILNGE (492 aa)). TPR repeat units lie at residues 446-479 (AKLW…QPDD), 480-513 (IGAH…MPQI), 529-562 (NVYI…RPDF), 563-596 (KQAY…DRNN), 597-631 (ADLW…NPKH), 669-702 (ANGY…QADF), 703-736 (RSAL…YPDH), 738-771 (KGLI…DPSN), and 772-805 (VQGK…APHE). An N-linked (GlcNAc...) asparagine glycan is attached at asparagine 494. At tyrosine 503 the chain carries Phosphotyrosine. N-linked (GlcNAc...) asparagine glycosylation occurs at asparagine 541. Residues 848–892 (KEIRGESRQTQIVKTSDNKSQSKSNKQLGKNGDEETPHKTTKDIK) are disordered. Asparagine 865 is a glycosylation site (N-linked (GlcNAc...) asparagine). The span at 865–874 (NKSQSKSNKQ) shows a compositional bias: low complexity. Residues 878-892 (NGDEETPHKTTKDIK) are compositionally biased toward basic and acidic residues.

This sequence belongs to the TMTC family.

It localises to the membrane. The protein localises to the endoplasmic reticulum. The catalysed reaction is a di-trans,poly-cis-dolichyl beta-D-mannosyl phosphate + L-seryl-[protein] = 3-O-(alpha-D-mannosyl)-L-seryl-[protein] + a di-trans,poly-cis-dolichyl phosphate + H(+). The enzyme catalyses a di-trans,poly-cis-dolichyl beta-D-mannosyl phosphate + L-threonyl-[protein] = 3-O-(alpha-D-mannosyl)-L-threonyl-[protein] + a di-trans,poly-cis-dolichyl phosphate + H(+). The protein operates within protein modification; protein glycosylation. Transfers mannosyl residues to the hydroxyl group of serine or threonine residues. The 4 members of the TMTC family are O-mannosyl-transferases dedicated primarily to the cadherin superfamily, each member seems to have a distinct role in decorating the cadherin domains with O-linked mannose glycans at specific regions. Also acts as O-mannosyl-transferase on other proteins such as PDIA3. Involved in the positive regulation of proteasomal protein degradation in the endoplasmic reticulum (ER), and the control of ER stress response. The polypeptide is Protein O-mannosyl-transferase TMTC3 (Homo sapiens (Human)).